The sequence spans 156 residues: ATP synthase subunit b (156 aa).

Residues 11-31 (AIAFILFVWFCMKYVWPPLMA) traverse the membrane as a helical segment.

It belongs to the ATPase B chain family. F-type ATPases have 2 components, F(1) - the catalytic core - and F(0) - the membrane proton channel. F(1) has five subunits: alpha(3), beta(3), gamma(1), delta(1), epsilon(1). F(0) has three main subunits: a(1), b(2) and c(10-14). The alpha and beta chains form an alternating ring which encloses part of the gamma chain. F(1) is attached to F(0) by a central stalk formed by the gamma and epsilon chains, while a peripheral stalk is formed by the delta and b chains.

The protein resides in the cell inner membrane. Functionally, f(1)F(0) ATP synthase produces ATP from ADP in the presence of a proton or sodium gradient. F-type ATPases consist of two structural domains, F(1) containing the extramembraneous catalytic core and F(0) containing the membrane proton channel, linked together by a central stalk and a peripheral stalk. During catalysis, ATP synthesis in the catalytic domain of F(1) is coupled via a rotary mechanism of the central stalk subunits to proton translocation. In terms of biological role, component of the F(0) channel, it forms part of the peripheral stalk, linking F(1) to F(0). The sequence is that of ATP synthase subunit b from Salmonella gallinarum (strain 287/91 / NCTC 13346).